Here is a 124-residue protein sequence, read N- to C-terminus: Ribonuclease P protein component (124 aa).

This sequence belongs to the RnpA family. In terms of assembly, consists of a catalytic RNA component (M1 or rnpB) and a protein subunit.

It carries out the reaction Endonucleolytic cleavage of RNA, removing 5'-extranucleotides from tRNA precursor.. Its function is as follows. RNaseP catalyzes the removal of the 5'-leader sequence from pre-tRNA to produce the mature 5'-terminus. It can also cleave other RNA substrates such as 4.5S RNA. The protein component plays an auxiliary but essential role in vivo by binding to the 5'-leader sequence and broadening the substrate specificity of the ribozyme. In Synechocystis sp. (strain ATCC 27184 / PCC 6803 / Kazusa), this protein is Ribonuclease P protein component.